We begin with the raw amino-acid sequence, 188 residues long: Elongation factor P (188 aa).

The protein belongs to the elongation factor P family.

Its subcellular location is the cytoplasm. The protein operates within protein biosynthesis; polypeptide chain elongation. Functionally, involved in peptide bond synthesis. Stimulates efficient translation and peptide-bond synthesis on native or reconstituted 70S ribosomes in vitro. Probably functions indirectly by altering the affinity of the ribosome for aminoacyl-tRNA, thus increasing their reactivity as acceptors for peptidyl transferase. In Gemmatimonas aurantiaca (strain DSM 14586 / JCM 11422 / NBRC 100505 / T-27), this protein is Elongation factor P.